Here is a 1017-residue protein sequence, read N- to C-terminus: Probable isoleucine--tRNA ligase, cytoplasmic (1017 aa).

Residues 45–55 (PFATGLPHYGH) carry the 'HIGH' region motif. The 'KMSKS' region signature appears at 609 to 613 (KMSKR). Residue Lys612 coordinates ATP.

This sequence belongs to the class-I aminoacyl-tRNA synthetase family.

The protein localises to the cytoplasm. It carries out the reaction tRNA(Ile) + L-isoleucine + ATP = L-isoleucyl-tRNA(Ile) + AMP + diphosphate. This is Probable isoleucine--tRNA ligase, cytoplasmic from Encephalitozoon cuniculi (strain GB-M1) (Microsporidian parasite).